Here is a 526-residue protein sequence, read N- to C-terminus: Bifunctional purine biosynthesis protein PurH (526 aa).

Residues 1 to 145 (MSKAPLALLS…KNHAHVGIVT (145 aa)) enclose the MGS-like domain.

The protein belongs to the PurH family.

The catalysed reaction is (6R)-10-formyltetrahydrofolate + 5-amino-1-(5-phospho-beta-D-ribosyl)imidazole-4-carboxamide = 5-formamido-1-(5-phospho-D-ribosyl)imidazole-4-carboxamide + (6S)-5,6,7,8-tetrahydrofolate. The enzyme catalyses IMP + H2O = 5-formamido-1-(5-phospho-D-ribosyl)imidazole-4-carboxamide. It functions in the pathway purine metabolism; IMP biosynthesis via de novo pathway; 5-formamido-1-(5-phospho-D-ribosyl)imidazole-4-carboxamide from 5-amino-1-(5-phospho-D-ribosyl)imidazole-4-carboxamide (10-formyl THF route): step 1/1. It participates in purine metabolism; IMP biosynthesis via de novo pathway; IMP from 5-formamido-1-(5-phospho-D-ribosyl)imidazole-4-carboxamide: step 1/1. The protein is Bifunctional purine biosynthesis protein PurH of Psychrobacter arcticus (strain DSM 17307 / VKM B-2377 / 273-4).